Here is a 231-residue protein sequence, read N- to C-terminus: Orotidine 5'-phosphate decarboxylase (231 aa).

Substrate-binding positions include Asp11, Lys33, Asp60–Thr69, Thr119, Arg181, Gln190, Gly210, and Arg211. Lys62 acts as the Proton donor in catalysis.

Belongs to the OMP decarboxylase family. Type 1 subfamily. Homodimer.

It catalyses the reaction orotidine 5'-phosphate + H(+) = UMP + CO2. It functions in the pathway pyrimidine metabolism; UMP biosynthesis via de novo pathway; UMP from orotate: step 2/2. Its function is as follows. Catalyzes the decarboxylation of orotidine 5'-monophosphate (OMP) to uridine 5'-monophosphate (UMP). This is Orotidine 5'-phosphate decarboxylase from Malacoplasma penetrans (strain HF-2) (Mycoplasma penetrans).